Consider the following 38-residue polypeptide: Photosystem II reaction center protein X (38 aa).

The chain crosses the membrane as a helical span at residues 9–29 (IASLFAGAFIALAIGGVLVFI).

It belongs to the PsbX family. Type 1 subfamily. PSII is composed of 1 copy each of membrane proteins PsbA, PsbB, PsbC, PsbD, PsbE, PsbF, PsbH, PsbI, PsbJ, PsbK, PsbL, PsbM, PsbT, PsbX, PsbY, PsbZ, Psb30/Ycf12, at least 3 peripheral proteins of the oxygen-evolving complex and a large number of cofactors. It forms dimeric complexes.

It is found in the plastid. The protein resides in the chloroplast thylakoid membrane. Functionally, involved in the binding and/or turnover of quinones at the Q(B) site of photosystem II (PSII). PSII is a light-driven water plastoquinone oxidoreductase, using light energy to abstract electrons from H(2)O, generating a proton gradient subsequently used for ATP formation. This chain is Photosystem II reaction center protein X, found in Phaeodactylum tricornutum (strain CCAP 1055/1).